A 313-amino-acid chain; its full sequence is Homoserine O-succinyltransferase (313 aa).

Residue Cys142 is the Acyl-thioester intermediate of the active site. Substrate is bound by residues Lys163 and Ser192. His235 functions as the Proton acceptor in the catalytic mechanism. Glu237 is an active-site residue. Position 249 (Arg249) interacts with substrate.

Belongs to the MetA family.

The protein localises to the cytoplasm. It catalyses the reaction L-homoserine + succinyl-CoA = O-succinyl-L-homoserine + CoA. The protein operates within amino-acid biosynthesis; L-methionine biosynthesis via de novo pathway; O-succinyl-L-homoserine from L-homoserine: step 1/1. Functionally, transfers a succinyl group from succinyl-CoA to L-homoserine, forming succinyl-L-homoserine. This Shewanella oneidensis (strain ATCC 700550 / JCM 31522 / CIP 106686 / LMG 19005 / NCIMB 14063 / MR-1) protein is Homoserine O-succinyltransferase.